Consider the following 174-residue polypeptide: Large ribosomal subunit protein uL6 (174 aa).

It belongs to the universal ribosomal protein uL6 family. In terms of assembly, part of the 50S ribosomal subunit.

This protein binds to the 23S rRNA, and is important in its secondary structure. It is located near the subunit interface in the base of the L7/L12 stalk, and near the tRNA binding site of the peptidyltransferase center. The protein is Large ribosomal subunit protein uL6 of Stenotrophomonas maltophilia (strain R551-3).